A 613-amino-acid chain; its full sequence is Serine/threonine-protein kinase pkpA (613 aa).

One can recognise a Protein kinase domain in the interval 17–269 (SKLNTVLGKG…AQEILEHRFL (253 aa)). ATP-binding positions include 23 to 31 (LGKGAYKVV) and Lys50. Asp140 acts as the Proton acceptor in catalysis. 2 disordered regions span residues 424–475 (LQPQ…STML) and 589–613 (VTQR…QELM). Pro residues predominate over residues 427–441 (QPQPQPQPQPQPQPQ). A compositionally biased stretch (low complexity) spans 442-475 (PQFQLQPQLQYLSPQSTTSPGPTSDDNSTNSTML). A compositionally biased stretch (polar residues) spans 592–602 (RGLQGTRSGAS).

This sequence belongs to the protein kinase superfamily. Ser/Thr protein kinase family.

The enzyme catalyses L-seryl-[protein] + ATP = O-phospho-L-seryl-[protein] + ADP + H(+). It carries out the reaction L-threonyl-[protein] + ATP = O-phospho-L-threonyl-[protein] + ADP + H(+). In terms of biological role, serine/threonine protein kinase that probably participates as an intermediate in an intracellular system controlling nuclear proliferation. The sequence is that of Serine/threonine-protein kinase pkpA (pkpA) from Phycomyces blakesleeanus (strain ATCC 8743b / DSM 1359 / FGSC 10004 / NBRC 33097 / NRRL 1555).